The chain runs to 892 residues: Formin-like protein 8 (892 aa).

The first 23 residues, 1 to 23, serve as a signal peptide directing secretion; the sequence is MPPAIARFVAIAAVLLCGHVAVA. The interval 43 to 119 is disordered; that stretch reads FPIEWTPPPS…SGSGSGHHGG (77 aa). The span at 47–59 shows a compositional bias: pro residues; it reads WTPPPSPPPPPAP. Over residues 87–111 the composition is skewed to low complexity; it reads TTPTSPGTTPSPTTVAADVSKTPSG. The helical transmembrane segment at 126-146 threads the bilayer; that stretch reads IVAAGAGAAAAVALLGFACAF. Positions 188–457 are disordered; the sequence is PTTPARHHGP…GSGEPRPKLK (270 aa). The span at 210–230 shows a compositional bias: basic and acidic residues; that stretch reads LRSERARRGVSRDEDADHPSP. 3 stretches are compositionally biased toward low complexity: residues 268-286, 297-306, and 321-330; these read AEAW…TTAS, FFPPVAAIAA, and RTRFSTGSTP. Residues 339 to 383 are compositionally biased toward pro residues; that stretch reads SPRPVQPSNAPPPPPPPPPPPPPPPPPKLNTAPKPPPPPPPPPSV. Residues 424-436 show a composition bias toward polar residues; sequence AATTVDNNGSTSM. Residues 446–867 form the FH2 domain; sequence DGGSGEPRPK…GSARSFRISA (422 aa).

The protein belongs to the formin-like family. Class-I subfamily.

Its subcellular location is the membrane. This Oryza sativa subsp. japonica (Rice) protein is Formin-like protein 8 (FH8).